The following is a 354-amino-acid chain: Uroporphyrinogen decarboxylase (354 aa).

Residues 27-31 (RQAGR), Asp-77, Tyr-154, Thr-209, and His-327 contribute to the substrate site.

The protein belongs to the uroporphyrinogen decarboxylase family. Homodimer.

The protein resides in the cytoplasm. It catalyses the reaction uroporphyrinogen III + 4 H(+) = coproporphyrinogen III + 4 CO2. The protein operates within porphyrin-containing compound metabolism; protoporphyrin-IX biosynthesis; coproporphyrinogen-III from 5-aminolevulinate: step 4/4. In terms of biological role, catalyzes the decarboxylation of four acetate groups of uroporphyrinogen-III to yield coproporphyrinogen-III. This Escherichia coli O81 (strain ED1a) protein is Uroporphyrinogen decarboxylase.